Reading from the N-terminus, the 137-residue chain is MRTLWIVAVCLIGVEGNLFQFGKMIKYKTGKSALLSYSAYGCYCGWGGQGKPQDPTDRCCFVHDCCYGRVNGCNPKMDTYSYSFLNGDIVCGDDDPCLRAICECDRAAAICFGENVNTYDKKYKYYSSSHCTETEQC.

The signal sequence occupies residues 1 to 16 (MRTLWIVAVCLIGVEG). Disulfide bonds link Cys-42-Cys-131, Cys-44-Cys-60, Cys-59-Cys-111, Cys-65-Cys-137, Cys-66-Cys-104, Cys-73-Cys-97, and Cys-91-Cys-102. Ca(2+)-binding residues include Tyr-43, Gly-45, and Gly-47. His-63 is an active-site residue. Asp-64 provides a ligand contact to Ca(2+). Residue Asp-105 is part of the active site.

Ca(2+) serves as cofactor. Expressed by the venom gland.

It localises to the secreted. It catalyses the reaction a 1,2-diacyl-sn-glycero-3-phosphocholine + H2O = a 1-acyl-sn-glycero-3-phosphocholine + a fatty acid + H(+). The chain is Acidic phospholipase A2 Vur-PL3 from Vipera renardi (Steppe viper).